Consider the following 206-residue polypeptide: Ribosomal RNA small subunit methyltransferase G (206 aa).

S-adenosyl-L-methionine-binding positions include Gly71, Phe76, 122 to 123, and Arg135; that span reads AE.

Belongs to the methyltransferase superfamily. RNA methyltransferase RsmG family.

It localises to the cytoplasm. Its function is as follows. Specifically methylates the N7 position of a guanine in 16S rRNA. The chain is Ribosomal RNA small subunit methyltransferase G from Bacteroides thetaiotaomicron (strain ATCC 29148 / DSM 2079 / JCM 5827 / CCUG 10774 / NCTC 10582 / VPI-5482 / E50).